Consider the following 80-residue polypeptide: Ataxin-8 (80 aa).

As to expression, specifically found in brains from SCA8 patients (at protein level).

The protein resides in the nucleus. This chain is Ataxin-8 (ATXN8), found in Homo sapiens (Human).